The following is a 267-amino-acid chain: Tryptophan synthase alpha chain (267 aa).

Catalysis depends on proton acceptor residues Glu49 and Asp60.

It belongs to the TrpA family. In terms of assembly, tetramer of two alpha and two beta chains.

The enzyme catalyses (1S,2R)-1-C-(indol-3-yl)glycerol 3-phosphate + L-serine = D-glyceraldehyde 3-phosphate + L-tryptophan + H2O. It functions in the pathway amino-acid biosynthesis; L-tryptophan biosynthesis; L-tryptophan from chorismate: step 5/5. In terms of biological role, the alpha subunit is responsible for the aldol cleavage of indoleglycerol phosphate to indole and glyceraldehyde 3-phosphate. This is Tryptophan synthase alpha chain from Geobacter sp. (strain M21).